Consider the following 235-residue polypeptide: Thiamine import ATP-binding protein ThiQ (235 aa).

An ABC transporter domain is found at 2–230; it reads LKLIDITWLY…QASASALLGI (229 aa). Residue 32–39 coordinates ATP; that stretch reads GPSGAGKS.

Belongs to the ABC transporter superfamily. Thiamine importer (TC 3.A.1.19.1) family. The complex is composed of two ATP-binding proteins (ThiQ), two transmembrane proteins (ThiP) and a solute-binding protein (ThiB).

Its subcellular location is the cell inner membrane. The enzyme catalyses thiamine(out) + ATP + H2O = thiamine(in) + ADP + phosphate + H(+). Its function is as follows. Part of the ABC transporter complex ThiBPQ involved in thiamine import. Responsible for energy coupling to the transport system. In Salmonella choleraesuis (strain SC-B67), this protein is Thiamine import ATP-binding protein ThiQ.